The chain runs to 194 residues: NADH-quinone oxidoreductase subunit B 1 (194 aa).

Residues cysteine 73, cysteine 74, cysteine 138, and cysteine 168 each coordinate [4Fe-4S] cluster.

This sequence belongs to the complex I 20 kDa subunit family. In terms of assembly, NDH-1 is composed of 14 different subunits. Subunits NuoB, C, D, E, F, and G constitute the peripheral sector of the complex. The cofactor is [4Fe-4S] cluster.

The protein resides in the cell inner membrane. It catalyses the reaction a quinone + NADH + 5 H(+)(in) = a quinol + NAD(+) + 4 H(+)(out). In terms of biological role, NDH-1 shuttles electrons from NADH, via FMN and iron-sulfur (Fe-S) centers, to quinones in the respiratory chain. The immediate electron acceptor for the enzyme in this species is believed to be ubiquinone. Couples the redox reaction to proton translocation (for every two electrons transferred, four hydrogen ions are translocated across the cytoplasmic membrane), and thus conserves the redox energy in a proton gradient. This is NADH-quinone oxidoreductase subunit B 1 from Rhizobium etli (strain CIAT 652).